The chain runs to 394 residues: Elongation factor Tu (394 aa).

The region spanning lysine 10–valine 204 is the tr-type G domain. Residues glycine 19–threonine 26 are G1. Glycine 19–threonine 26 is a binding site for GTP. A Mg(2+)-binding site is contributed by threonine 26. Residues glycine 60 to asparagine 64 are G2. A G3 region spans residues aspartate 81–glycine 84. Residues aspartate 81–histidine 85 and asparagine 136–aspartate 139 each bind GTP. A G4 region spans residues asparagine 136–aspartate 139. Positions serine 174 to leucine 176 are G5.

This sequence belongs to the TRAFAC class translation factor GTPase superfamily. Classic translation factor GTPase family. EF-Tu/EF-1A subfamily. In terms of assembly, monomer.

Its subcellular location is the cytoplasm. It carries out the reaction GTP + H2O = GDP + phosphate + H(+). GTP hydrolase that promotes the GTP-dependent binding of aminoacyl-tRNA to the A-site of ribosomes during protein biosynthesis. The protein is Elongation factor Tu of Mycoplasmopsis synoviae (strain 53) (Mycoplasma synoviae).